The chain runs to 244 residues: L-xylulose reductase (244 aa).

Met1 carries the post-translational modification N-acetylmethionine. Position 11–39 (11–39) interacts with NADP(+); sequence LVTGAGKGIGRSTVLALKAAGAQVVAVSR. Arg21 carries the omega-N-methylarginine modification. Substrate is bound at residue Ser136. Tyr149 acts as the Proton acceptor in catalysis. The active site involves Lys153.

Belongs to the short-chain dehydrogenases/reductases (SDR) family. In terms of assembly, homotetramer. Highly expressed in kidney and liver. Expressed in epididymis. Expressed at intermediate level in lung. Weakly expressed in brain, heart, spleen and testis.

Its subcellular location is the membrane. It carries out the reaction xylitol + NADP(+) = L-xylulose + NADPH + H(+). In terms of biological role, catalyzes the NADPH-dependent reduction of several pentoses, tetroses, trioses, alpha-dicarbonyl compounds and L-xylulose. Participates in the uronate cycle of glucose metabolism. May play a role in the water absorption and cellular osmoregulation in the proximal renal tubules by producing xylitol, an osmolyte, thereby preventing osmolytic stress from occurring in the renal tubules. In Cavia porcellus (Guinea pig), this protein is L-xylulose reductase (DCXR).